The following is a 450-amino-acid chain: tRNA modification GTPase MnmE (450 aa).

(6S)-5-formyl-5,6,7,8-tetrahydrofolate-binding residues include R23, E79, and K118. In terms of domain architecture, TrmE-type G spans G214 to G374. N224 contacts K(+). GTP contacts are provided by residues N224–S229, T243–T249, and D268–G271. S228 is a binding site for Mg(2+). T243, I245, and T248 together coordinate K(+). T249 contributes to the Mg(2+) binding site. K450 serves as a coordination point for (6S)-5-formyl-5,6,7,8-tetrahydrofolate.

It belongs to the TRAFAC class TrmE-Era-EngA-EngB-Septin-like GTPase superfamily. TrmE GTPase family. Homodimer. Heterotetramer of two MnmE and two MnmG subunits. It depends on K(+) as a cofactor.

The protein resides in the cytoplasm. Its function is as follows. Exhibits a very high intrinsic GTPase hydrolysis rate. Involved in the addition of a carboxymethylaminomethyl (cmnm) group at the wobble position (U34) of certain tRNAs, forming tRNA-cmnm(5)s(2)U34. The chain is tRNA modification GTPase MnmE from Francisella tularensis subsp. novicida (strain U112).